The primary structure comprises 360 residues: Phospho-N-acetylmuramoyl-pentapeptide-transferase (360 aa).

Transmembrane regions (helical) follow at residues 21–41, 73–93, 94–114, 132–152, 168–188, 199–219, 239–259, 263–283, 288–308, and 338–358; these read YLSFRAIVSILTALGISLWMG, TMGGVMILAAITITVLLWADL, TNPYVWAVLAVLLGYGAVGFV, WKYFWQSAIALVVAFALYAHG, VMPQLGLMYIVLTYFVIVGTS, GLAIMPTVLVAAGFAAIAWAT, LVVVCTAMVGAGLGFLWFNTY, VFMGDVGALALGGALGTIAVL, FVLVIMGGVFVMETLSVILQV, and VIVRFWIISIVLVLIGLATLK.

Belongs to the glycosyltransferase 4 family. MraY subfamily. Mg(2+) is required as a cofactor.

The protein localises to the cell inner membrane. It catalyses the reaction UDP-N-acetyl-alpha-D-muramoyl-L-alanyl-gamma-D-glutamyl-meso-2,6-diaminopimeloyl-D-alanyl-D-alanine + di-trans,octa-cis-undecaprenyl phosphate = di-trans,octa-cis-undecaprenyl diphospho-N-acetyl-alpha-D-muramoyl-L-alanyl-D-glutamyl-meso-2,6-diaminopimeloyl-D-alanyl-D-alanine + UMP. The protein operates within cell wall biogenesis; peptidoglycan biosynthesis. Functionally, catalyzes the initial step of the lipid cycle reactions in the biosynthesis of the cell wall peptidoglycan: transfers peptidoglycan precursor phospho-MurNAc-pentapeptide from UDP-MurNAc-pentapeptide onto the lipid carrier undecaprenyl phosphate, yielding undecaprenyl-pyrophosphoryl-MurNAc-pentapeptide, known as lipid I. The chain is Phospho-N-acetylmuramoyl-pentapeptide-transferase from Vibrio cholerae serotype O1 (strain M66-2).